The primary structure comprises 82 residues: Small ribosomal subunit protein bS18 (82 aa).

A disordered region spans residues 1-21 (MKRNNSKKVRVEPTRRPKKNP).

It belongs to the bacterial ribosomal protein bS18 family. In terms of assembly, part of the 30S ribosomal subunit. Forms a tight heterodimer with protein bS6.

Its function is as follows. Binds as a heterodimer with protein bS6 to the central domain of the 16S rRNA, where it helps stabilize the platform of the 30S subunit. This is Small ribosomal subunit protein bS18 from Corynebacterium kroppenstedtii (strain DSM 44385 / JCM 11950 / CIP 105744 / CCUG 35717).